The primary structure comprises 397 residues: Succinate--CoA ligase [ADP-forming] subunit beta (397 aa).

The ATP-grasp domain occupies 9–254 (KELLRGYGAP…TSEEDEKEIE (246 aa)). ATP-binding positions include Lys46, 53–55 (GRG), Glu109, Ala112, and Glu117. Mg(2+) is bound by residues Asn209 and Asp223. Residues Asn274 and 331–333 (GIM) each bind substrate.

The protein belongs to the succinate/malate CoA ligase beta subunit family. As to quaternary structure, heterotetramer of two alpha and two beta subunits. Mg(2+) serves as cofactor.

It carries out the reaction succinate + ATP + CoA = succinyl-CoA + ADP + phosphate. It catalyses the reaction GTP + succinate + CoA = succinyl-CoA + GDP + phosphate. It participates in carbohydrate metabolism; tricarboxylic acid cycle; succinate from succinyl-CoA (ligase route): step 1/1. Its function is as follows. Succinyl-CoA synthetase functions in the citric acid cycle (TCA), coupling the hydrolysis of succinyl-CoA to the synthesis of either ATP or GTP and thus represents the only step of substrate-level phosphorylation in the TCA. The beta subunit provides nucleotide specificity of the enzyme and binds the substrate succinate, while the binding sites for coenzyme A and phosphate are found in the alpha subunit. This Chelativorans sp. (strain BNC1) protein is Succinate--CoA ligase [ADP-forming] subunit beta.